The following is a 216-amino-acid chain: Probable nicotinate-nucleotide adenylyltransferase (216 aa).

It belongs to the NadD family.

The enzyme catalyses nicotinate beta-D-ribonucleotide + ATP + H(+) = deamido-NAD(+) + diphosphate. It functions in the pathway cofactor biosynthesis; NAD(+) biosynthesis; deamido-NAD(+) from nicotinate D-ribonucleotide: step 1/1. Functionally, catalyzes the reversible adenylation of nicotinate mononucleotide (NaMN) to nicotinic acid adenine dinucleotide (NaAD). In Geobacter sp. (strain M21), this protein is Probable nicotinate-nucleotide adenylyltransferase.